The sequence spans 803 residues: Elongation factor G, mitochondrial (803 aa).

A mitochondrion-targeting transit peptide spans 1 to 24; it reads MVRPAQVRAFSGLARSATSTRLIP. The 287-residue stretch at 102-388 folds into the tr-type G domain; that stretch reads SKVRNIGIAA…GVCDYLPNPS (287 aa). GTP contacts are provided by residues 111-118, 186-190, and 240-243; these read AHIDSGKT, DTPGH, and NKMD.

This sequence belongs to the TRAFAC class translation factor GTPase superfamily. Classic translation factor GTPase family. EF-G/EF-2 subfamily.

The protein resides in the mitochondrion. Its pathway is protein biosynthesis; polypeptide chain elongation. In terms of biological role, mitochondrial GTPase that catalyzes the GTP-dependent ribosomal translocation step during translation elongation. During this step, the ribosome changes from the pre-translocational (PRE) to the post-translocational (POST) state as the newly formed A-site-bound peptidyl-tRNA and P-site-bound deacylated tRNA move to the P and E sites, respectively. Catalyzes the coordinated movement of the two tRNA molecules, the mRNA and conformational changes in the ribosome. The protein is Elongation factor G, mitochondrial (mef1) of Talaromyces marneffei (strain ATCC 18224 / CBS 334.59 / QM 7333) (Penicillium marneffei).